Here is a 239-residue protein sequence, read N- to C-terminus: DnaA regulatory inactivator Hda (239 aa).

The protein belongs to the DnaA family. HdA subfamily. In terms of assembly, the active form seems to be an ADP-bound monomer. Forms the RIDA complex (regulatory inactivation of DnaA) of ATP-DnaA, ADP-Hda and the DNA-loaded beta sliding clamp (dnaN).

Mediates the interaction of DNA replication initiator protein DnaA with DNA polymerase subunit beta sliding clamp (dnaN). Stimulates hydrolysis of ATP-DnaA to ADP-DnaA, rendering DnaA inactive for reinitiation, a process called regulatory inhibition of DnaA or RIDA. The chain is DnaA regulatory inactivator Hda from Yersinia pseudotuberculosis serotype O:1b (strain IP 31758).